The following is a 356-amino-acid chain: Arginine kinase 1 (356 aa).

Residues 6-91 enclose the Phosphagen kinase N-terminal domain; that stretch reads VLAKLEEGYA…FDPIIEDYHG (86 aa). Position 64 to 68 (64 to 68) interacts with substrate; the sequence is GVGIY. Residues 119–356 enclose the Phosphagen kinase C-terminal domain; the sequence is YVISTRVRCG…TELIKLEKSL (238 aa). ATP contacts are provided by residues 122-126 and His185; that span reads STRVR. A substrate-binding site is contributed by Glu225. Residue Arg229 participates in ATP binding. Cys271 provides a ligand contact to substrate. ATP-binding positions include 280–284 and 309–314; these read RASVH and RGTRGE. Glu314 is a substrate binding site.

Belongs to the ATP:guanido phosphotransferase family.

It catalyses the reaction L-arginine + ATP = N(omega)-phospho-L-arginine + ADP + H(+). This Drosophila melanogaster (Fruit fly) protein is Arginine kinase 1.